The chain runs to 327 residues: Metapyrocatechase (327 aa).

VOC domains are found at residues 14–126 (QLAH…IFFE) and 156–276 (RLDH…LFGD). Fe cation contacts are provided by H159, H221, and E272.

It belongs to the extradiol ring-cleavage dioxygenase family. The cofactor is Fe(2+).

It carries out the reaction catechol + O2 = (2Z,4E)-2-hydroxy-6-oxohexa-2,4-dienoate + H(+). The sequence is that of Metapyrocatechase (pheB) from Geobacillus stearothermophilus (Bacillus stearothermophilus).